A 262-amino-acid chain; its full sequence is tRNA (guanine-N(1)-)-methyltransferase (262 aa).

S-adenosyl-L-methionine is bound by residues G113 and 137 to 142 (IGDYVL).

It belongs to the RNA methyltransferase TrmD family. As to quaternary structure, homodimer.

It is found in the cytoplasm. The enzyme catalyses guanosine(37) in tRNA + S-adenosyl-L-methionine = N(1)-methylguanosine(37) in tRNA + S-adenosyl-L-homocysteine + H(+). In terms of biological role, specifically methylates guanosine-37 in various tRNAs. This is tRNA (guanine-N(1)-)-methyltransferase from Thermobifida fusca (strain YX).